The sequence spans 757 residues: Polyribonucleotide nucleotidyltransferase (757 aa).

Residues D525 and D531 each coordinate Mg(2+). The region spanning 591-650 is the KH domain; it reads PRVISVNIPVDKIGELIGPKGKTINAIQDETGADISIEEDGAVYIGAVDGPSAEAARAQV. The region spanning 662–734 is the S1 motif domain; sequence GESFLGTVVK…DRGKLSLAPV (73 aa). The segment at 736-757 is disordered; that stretch reads EEAADQEGSAAASDGPEAPAEG.

It belongs to the polyribonucleotide nucleotidyltransferase family. It depends on Mg(2+) as a cofactor.

The protein resides in the cytoplasm. The enzyme catalyses RNA(n+1) + phosphate = RNA(n) + a ribonucleoside 5'-diphosphate. Functionally, involved in mRNA degradation. Catalyzes the phosphorolysis of single-stranded polyribonucleotides processively in the 3'- to 5'-direction. This is Polyribonucleotide nucleotidyltransferase from Clavibacter sepedonicus (Clavibacter michiganensis subsp. sepedonicus).